Consider the following 900-residue polypeptide: Nuclear factor NF-kappa-B p100 subunit (900 aa).

A phosphoserine mark is found at Ser-23 and Ser-161. An RHD domain is found at 38–343 (PYLVIVEQPK…EVQRKRRKAL (306 aa)). A Nuclear localization signal motif is present at residues 337-341 (RKRRK). The tract at residues 346-377 (FSQPFGGGSHMGGGSGGAAGGYGGAGGGGSLG) is GRR. Residues 404–435 (GAQMAATVPSRDSGEEAAEPSAPSRTPQCEPQ) are disordered. Thr-429 is subject to Phosphothreonine. 6 ANK repeats span residues 487-519 (NGDT…DLGV), 526-555 (LHQT…DPAL), 559-591 (HGDS…AVPQ), 599-628 (EGLY…EVEA), 633-663 (GGRT…NVNA), and 667-696 (AGNT…DIHA). The disordered stretch occupies residues 698-734 (NEEPLCPLPSPPTSDSDSDSEGPEKDTRSSFRGHTPL). Phosphoserine is present on residues Ser-713, Ser-715, and Ser-717. One copy of the ANK 7 repeat lies at 729-758 (RGHTPLDLTCSTKVKTLLLNAAQNTMEPPL). One can recognise a Death domain in the interval 764–851 (AGPGLSLGDT…EGVRLLRGPE (88 aa)). The residue at position 812 (Ser-812) is a Phosphoserine. Positions 849-866 (GPETRDKLPSTAEVKEDS) are enriched in basic and acidic residues. Positions 849-900 (GPETRDKLPSTAEVKEDSAYGSQSVEQEAEKLGPPPEPPGGLCHGHPQPQVH) are disordered. A Glycyl lysine isopeptide (Lys-Gly) (interchain with G-Cter in ubiquitin) cross-link involves residue Lys-855. A phosphoserine; by MAP3K14 mark is found at Ser-866 and Ser-870. Residues 888–900 (GGLCHGHPQPQVH) are compositionally biased toward low complexity.

In terms of assembly, component of the NF-kappa-B RelB-p52 complex. Homodimer; component of the NF-kappa-B p52-p52 complex. Component of the NF-kappa-B p65-p52 complex. Component of the NF-kappa-B p52-c-Rel complex. NFKB2/p52 interacts with NFKBIE. Component of a complex consisting of the NF-kappa-B p50-p50 homodimer and BCL3. Directly interacts with MEN1. In terms of processing, while translation occurs, the particular unfolded structure after the GRR repeat promotes the generation of p52 making it an acceptable substrate for the proteasome. This process is known as cotranslational processing. The processed form is active and the unprocessed form acts as an inhibitor (I kappa B-like), being able to form cytosolic complexes with NF-kappa B, trapping it in the cytoplasm. Complete folding of the region downstream of the GRR repeat precludes processing. Subsequent to MAP3K14-dependent serine phosphorylation, p100 polyubiquitination occurs then triggering its proteasome-dependent processing. Post-translationally, constitutive processing is tightly suppressed by its C-terminal processing inhibitory domain, named PID, which contains the death domain. In terms of processing, ubiquitinated by TRIM55; leading to processing by VCP and subsequent ubiquitin-dependent protein degradation by the proteasome.

It localises to the nucleus. The protein localises to the cytoplasm. NF-kappa-B is a pleiotropic transcription factor present in almost all cell types and is the endpoint of a series of signal transduction events that are initiated by a vast array of stimuli related to many biological processes such as inflammation, immunity, differentiation, cell growth, tumorigenesis and apoptosis. NF-kappa-B is a homo- or heterodimeric complex formed by the Rel-like domain-containing proteins RELA/p65, RELB, NFKB1/p105, NFKB1/p50, REL and NFKB2/p52. The dimers bind at kappa-B sites in the DNA of their target genes and the individual dimers have distinct preferences for different kappa-B sites that they can bind with distinguishable affinity and specificity. Different dimer combinations act as transcriptional activators or repressors, respectively. NF-kappa-B is controlled by various mechanisms of post-translational modification and subcellular compartmentalization as well as by interactions with other cofactors or corepressors. NF-kappa-B complexes are held in the cytoplasm in an inactive state complexed with members of the NF-kappa-B inhibitor (I-kappa-B) family. In a conventional activation pathway, I-kappa-B is phosphorylated by I-kappa-B kinases (IKKs) in response to different activators, subsequently degraded thus liberating the active NF-kappa-B complex which translocates to the nucleus. In a non-canonical activation pathway, the MAP3K14-activated CHUK/IKKA homodimer phosphorylates NFKB2/p100 associated with RelB, inducing its proteolytic processing to NFKB2/p52 and the formation of NF-kappa-B RelB-p52 complexes. The NF-kappa-B heterodimeric RelB-p52 complex is a transcriptional activator. The NF-kappa-B p52-p52 homodimer is a transcriptional repressor. NFKB2 appears to have dual functions such as cytoplasmic retention of attached NF-kappa-B proteins by p100 and generation of p52 by a cotranslational processing. The proteasome-mediated process ensures the production of both p52 and p100 and preserves their independent function. p52 binds to the kappa-B consensus sequence 5'-GGRNNYYCC-3', located in the enhancer region of genes involved in immune response and acute phase reactions. p52 and p100 are respectively the minor and major form; the processing of p100 being relatively poor. Isoform p49 is a subunit of the NF-kappa-B protein complex, which stimulates the HIV enhancer in synergy with p65. In concert with RELB, regulates the circadian clock by repressing the transcriptional activator activity of the CLOCK-BMAL1 heterodimer. The chain is Nuclear factor NF-kappa-B p100 subunit (NFKB2) from Homo sapiens (Human).